Consider the following 315-residue polypeptide: Olfactory receptor 4E1 (315 aa).

At M1–S33 the chain is on the extracellular side. A glycan (N-linked (GlcNAc...) asparagine) is linked at N8. The helical transmembrane segment at M34–I54 threads the bilayer. The Cytoplasmic portion of the chain corresponds to Y55–T61. A helical transmembrane segment spans residues P62 to V82. Residues P83–C101 are Extracellular-facing. An intrachain disulfide couples C101 to C183. A helical membrane pass occupies residues V102 to M122. Over A123–K143 the chain is Cytoplasmic. Residues V144–T164 form a helical membrane-spanning segment. The Extracellular portion of the chain corresponds to S165–G208. Residues L209 to L229 form a helical membrane-spanning segment. Topologically, residues R230 to A240 are cytoplasmic. Residues L241–I261 traverse the membrane as a helical segment. Over Y262–D272 the chain is Extracellular. Residues K273 to L293 form a helical membrane-spanning segment. The Cytoplasmic segment spans residues R294–K315.

It belongs to the G-protein coupled receptor 1 family.

It is found in the cell membrane. Functionally, odorant receptor. This Homo sapiens (Human) protein is Olfactory receptor 4E1 (OR4E1).